The chain runs to 825 residues: Arabinolytic transcriptional activator araR (825 aa).

The span at Met1–Asp17 shows a compositional bias: polar residues. Positions Met1–Trp28 are disordered. Positions Cys35 to Cys61 form a DNA-binding region, zn(2)-C6 fungal-type. The disordered stretch occupies residues Ser117–Pro152.

This sequence belongs to the xlnR/xlr1 family. araR subfamily.

The protein localises to the nucleus. In terms of biological role, transcriptional activator of the arabinanolytic system. Involved in the regulation of extracellular arabinanolytic genes and in the regulation of the intracellular activities of L-arabinose catabolic genes in the pentose catabolic pathway (PCP) in response to the presence of L-arabinose. The protein is Arabinolytic transcriptional activator araR of Emericella nidulans (strain FGSC A4 / ATCC 38163 / CBS 112.46 / NRRL 194 / M139) (Aspergillus nidulans).